Here is a 190-residue protein sequence, read N- to C-terminus: Protein GrpE (190 aa).

Residues 1–41 (MAKEKQEEQQKQTAPENEKAPKKDIKKEASDKKGDQTSKLK) are disordered.

This sequence belongs to the GrpE family. In terms of assembly, homodimer.

Its subcellular location is the cytoplasm. Participates actively in the response to hyperosmotic and heat shock by preventing the aggregation of stress-denatured proteins, in association with DnaK and GrpE. It is the nucleotide exchange factor for DnaK and may function as a thermosensor. Unfolded proteins bind initially to DnaJ; upon interaction with the DnaJ-bound protein, DnaK hydrolyzes its bound ATP, resulting in the formation of a stable complex. GrpE releases ADP from DnaK; ATP binding to DnaK triggers the release of the substrate protein, thus completing the reaction cycle. Several rounds of ATP-dependent interactions between DnaJ, DnaK and GrpE are required for fully efficient folding. The sequence is that of Protein GrpE from Limosilactobacillus reuteri (strain DSM 20016) (Lactobacillus reuteri).